The chain runs to 256 residues: Ferritin-3, chloroplastic (256 aa).

The N-terminal 54 residues, 1–54 (MALSCSKVLTFSLSSVVGGDDAKKKLSLCSSSSLSASVNGGGSRNMRVCAAASN), are a transit peptide targeting the chloroplast. The segment at 55 to 87 (APAPLTGVIFEPFQELKKDYLAVPIAPNVSLSR) is extension peptide (EP). One can recognise a Ferritin-like diiron domain in the interval 88 to 241 (QNYSDEAEAA…EYVTQLRLVG (154 aa)). Fe cation is bound by residues E105, E140, H143, E189, and Q223.

This sequence belongs to the ferritin family. Oligomer of 24 subunits. There are two types of subunits: L (light) chain and H (heavy) chain. The major chain can be light or heavy, depending on the species and tissue type. The functional molecule forms a roughly spherical shell with a diameter of 12 nm and contains a central cavity into which the insoluble mineral iron core is deposited.

Its subcellular location is the plastid. It localises to the chloroplast. It catalyses the reaction 4 Fe(2+) + O2 + 4 H(+) = 4 Fe(3+) + 2 H2O. Functionally, stores iron in a soluble, non-toxic, readily available form. Important for iron homeostasis. Has ferroxidase activity. Iron is taken up in the ferrous form and deposited as ferric hydroxides after oxidation. This chain is Ferritin-3, chloroplastic, found in Vigna unguiculata (Cowpea).